The sequence spans 83 residues: Hainantoxin-III 8 (83 aa).

Positions methionine 1–alanine 21 are cleaved as a signal peptide. Residues serine 22 to arginine 48 constitute a propeptide that is removed on maturation. 3 cysteine pairs are disulfide-bonded: cysteine 50-cysteine 65, cysteine 57-cysteine 70, and cysteine 64-cysteine 77. A Leucine amide modification is found at leucine 81.

The protein belongs to the neurotoxin 10 (Hwtx-1) family. 15 (Hntx-3) subfamily. As to quaternary structure, monomer. In terms of tissue distribution, expressed by the venom gland.

Its subcellular location is the secreted. Functionally, selective antagonist of neuronal tetrodotoxin (TTX)-sensitive voltage-gated sodium channels (IC(50)=1270 nM on Nav1.1/SCN1A, 270 nM on Nav1.2/SCN2A, 491 nM on Nav1.3/SCN3A and 232 nM on Nav1.7/SCN9A). This toxin suppress Nav1.7 current amplitude without significantly altering the activation, inactivation, and repriming kinetics. Short extreme depolarizations partially activate the toxin-bound channel, indicating voltage-dependent inhibition of this toxin. This toxin increases the deactivation of the Nav1.7 current after extreme depolarizations. The toxin-Nav1.7 complex is gradually dissociated upon prolonged strong depolarizations in a voltage-dependent manner, and the unbound toxin rebinds to Nav1.7 after a long repolarization. Moreover, analysis of chimeric channels showed that the DIIS3-S4 linker is critical for toxin binding to Nav1.7. These data are consistent with this toxin interacting with Nav1.7 site 4 and trapping the domain II voltage sensor in the closed state. The sequence is that of Hainantoxin-III 8 from Cyriopagopus hainanus (Chinese bird spider).